A 54-amino-acid chain; its full sequence is uncharacterized protein (54 aa).

Residues 13–54 (VAGDSGGNPENISIGTTSGAVVNKGPEQIPKKKKEESKEKEE) are disordered. Residues 20 to 32 (NPENISIGTTSGA) are compositionally biased toward polar residues. Basic and acidic residues predominate over residues 41–54 (IPKKKKEESKEKEE).

This is an uncharacterized protein from Enterobacteria phage T4 (Bacteriophage T4).